We begin with the raw amino-acid sequence, 201 residues long: Small ribosomal subunit protein uS4 (201 aa).

The tract at residues 1-46 (MARYTGPRSRISRRFGEPVMGDSKALQKKNYAPGMHGRNKKRKQSE) is disordered. In terms of domain architecture, S4 RNA-binding spans 92–151 (ARLDNTVYRLGIASSRRAARQLVIHKHIVVNGDVVNIPSYQLKPGDQLGVREKSKSIEAI).

It belongs to the universal ribosomal protein uS4 family. In terms of assembly, part of the 30S ribosomal subunit. Contacts protein S5. The interaction surface between S4 and S5 is involved in control of translational fidelity.

Its function is as follows. One of the primary rRNA binding proteins, it binds directly to 16S rRNA where it nucleates assembly of the body of the 30S subunit. Functionally, with S5 and S12 plays an important role in translational accuracy. The protein is Small ribosomal subunit protein uS4 of Cytophaga hutchinsonii (strain ATCC 33406 / DSM 1761 / CIP 103989 / NBRC 15051 / NCIMB 9469 / D465).